The primary structure comprises 77 residues: uncharacterized protein (77 aa).

2 4Fe-4S ferredoxin-type domains span residues 3–32 and 36–65; these read VEII…WTKD and KYYA…IKVV. [4Fe-4S] cluster-binding residues include Cys-12, Cys-15, Cys-18, Cys-22, Cys-45, Cys-48, Cys-51, and Cys-55.

[4Fe-4S] cluster serves as cofactor.

Ferredoxins are iron-sulfur proteins that transfer electrons probably in the CO-dehydrogenase complex. This is an uncharacterized protein from Methanocaldococcus jannaschii (strain ATCC 43067 / DSM 2661 / JAL-1 / JCM 10045 / NBRC 100440) (Methanococcus jannaschii).